The primary structure comprises 204 residues: 3-isopropylmalate dehydratase small subunit (204 aa).

Belongs to the LeuD family. LeuD type 1 subfamily. Heterodimer of LeuC and LeuD.

The enzyme catalyses (2R,3S)-3-isopropylmalate = (2S)-2-isopropylmalate. The protein operates within amino-acid biosynthesis; L-leucine biosynthesis; L-leucine from 3-methyl-2-oxobutanoate: step 2/4. In terms of biological role, catalyzes the isomerization between 2-isopropylmalate and 3-isopropylmalate, via the formation of 2-isopropylmaleate. This Vesicomyosocius okutanii subsp. Calyptogena okutanii (strain HA) protein is 3-isopropylmalate dehydratase small subunit.